Reading from the N-terminus, the 834-residue chain is Periplasmic nitrate reductase (834 aa).

A signal peptide (tat-type signal) is located at residues 1-29 (MNLTRREFAKANAAAIAAAAAGLPILVRA). The 4Fe-4S Mo/W bis-MGD-type domain maps to 41–97 (LVWNKAPCRFCGTGCSVMVATRDGQVVATHGDIKAEVNRGINCVKGYFLSKIMYGSD). [4Fe-4S] cluster contacts are provided by cysteine 48, cysteine 51, cysteine 55, and cysteine 83. Mo-bis(molybdopterin guanine dinucleotide) is bound by residues lysine 85, glutamine 152, asparagine 177, cysteine 181, 214–221 (WGSNMAEM), 245–249 (STFEH), 264–266 (QTD), methionine 375, glutamine 379, asparagine 485, 511–512 (SD), lysine 534, aspartate 561, and 721–730 (TGRVLEHWHT). Residue phenylalanine 797 coordinates substrate. 2 residues coordinate Mo-bis(molybdopterin guanine dinucleotide): asparagine 805 and lysine 822.

Belongs to the prokaryotic molybdopterin-containing oxidoreductase family. NasA/NapA/NarB subfamily. In terms of assembly, component of the periplasmic nitrate reductase NapAB complex composed of NapA and NapB. It depends on [4Fe-4S] cluster as a cofactor. Mo-bis(molybdopterin guanine dinucleotide) serves as cofactor. In terms of processing, predicted to be exported by the Tat system. The position of the signal peptide cleavage has not been experimentally proven.

It is found in the periplasm. It carries out the reaction 2 Fe(II)-[cytochrome] + nitrate + 2 H(+) = 2 Fe(III)-[cytochrome] + nitrite + H2O. Functionally, catalytic subunit of the periplasmic nitrate reductase complex NapAB. Receives electrons from NapB and catalyzes the reduction of nitrate to nitrite. This Pseudomonas aeruginosa (strain UCBPP-PA14) protein is Periplasmic nitrate reductase.